Consider the following 503-residue polypeptide: ATP synthase subunit alpha (503 aa).

ATP is bound at residue 170 to 177; the sequence is GDRQTGKT.

This sequence belongs to the ATPase alpha/beta chains family. As to quaternary structure, F-type ATPases have 2 components, CF(1) - the catalytic core - and CF(0) - the membrane proton channel. CF(1) has five subunits: alpha(3), beta(3), gamma(1), delta(1), epsilon(1). CF(0) has three main subunits: a(1), b(2) and c(9-12). The alpha and beta chains form an alternating ring which encloses part of the gamma chain. CF(1) is attached to CF(0) by a central stalk formed by the gamma and epsilon chains, while a peripheral stalk is formed by the delta and b chains.

It is found in the cell inner membrane. The catalysed reaction is ATP + H2O + 4 H(+)(in) = ADP + phosphate + 5 H(+)(out). Produces ATP from ADP in the presence of a proton gradient across the membrane. The alpha chain is a regulatory subunit. The polypeptide is ATP synthase subunit alpha (Thermotoga maritima (strain ATCC 43589 / DSM 3109 / JCM 10099 / NBRC 100826 / MSB8)).